Consider the following 349-residue polypeptide: tRNA pseudouridine synthase D (349 aa).

Phe27 contributes to the substrate binding site. Asp80 functions as the Nucleophile in the catalytic mechanism. Asn129 is a binding site for substrate. Positions Gly155–Leu303 constitute a TRUD domain. Residue Phe329 coordinates substrate.

The protein belongs to the pseudouridine synthase TruD family.

The catalysed reaction is uridine(13) in tRNA = pseudouridine(13) in tRNA. In terms of biological role, responsible for synthesis of pseudouridine from uracil-13 in transfer RNAs. In Shigella boydii serotype 18 (strain CDC 3083-94 / BS512), this protein is tRNA pseudouridine synthase D.